The primary structure comprises 660 residues: UvrABC system protein B (660 aa).

Residues 27–414 (NGVNEGKRHQ…TDEMVQQIIR (388 aa)) enclose the Helicase ATP-binding domain. 40–47 (GATGTGKT) is an ATP binding site. The short motif at 93 to 116 (YYDYYQPEAYVPSTDTFIEKDASI) is the Beta-hairpin element. Residues 431–593 (QIDDLLGEIQ…ITPTTINKKI (163 aa)) enclose the Helicase C-terminal domain. The tract at residues 603-622 (NDETNEQQQTEVPKKMTKKE) is disordered. The UVR domain occupies 624-659 (EKTIANIEKEMKQAAKDLDFEKATELRDMLFELKAE).

The protein belongs to the UvrB family. In terms of assembly, forms a heterotetramer with UvrA during the search for lesions. Interacts with UvrC in an incision complex.

The protein resides in the cytoplasm. Its function is as follows. The UvrABC repair system catalyzes the recognition and processing of DNA lesions. A damage recognition complex composed of 2 UvrA and 2 UvrB subunits scans DNA for abnormalities. Upon binding of the UvrA(2)B(2) complex to a putative damaged site, the DNA wraps around one UvrB monomer. DNA wrap is dependent on ATP binding by UvrB and probably causes local melting of the DNA helix, facilitating insertion of UvrB beta-hairpin between the DNA strands. Then UvrB probes one DNA strand for the presence of a lesion. If a lesion is found the UvrA subunits dissociate and the UvrB-DNA preincision complex is formed. This complex is subsequently bound by UvrC and the second UvrB is released. If no lesion is found, the DNA wraps around the other UvrB subunit that will check the other stand for damage. This Staphylococcus saprophyticus subsp. saprophyticus (strain ATCC 15305 / DSM 20229 / NCIMB 8711 / NCTC 7292 / S-41) protein is UvrABC system protein B.